A 196-amino-acid chain; its full sequence is Small ribosomal subunit protein uS4c (196 aa).

Residues 16-36 (GALPGLTRKTPKSGSNLKKKF) are disordered. The S4 RNA-binding domain maps to 89 to 169 (MRLDNILFRL…LPKHLTIDTL (81 aa)).

The protein belongs to the universal ribosomal protein uS4 family. Part of the 30S ribosomal subunit. Contacts protein S5. The interaction surface between S4 and S5 is involved in control of translational fidelity.

It is found in the plastid. It localises to the chloroplast. One of the primary rRNA binding proteins, it binds directly to 16S rRNA where it nucleates assembly of the body of the 30S subunit. In terms of biological role, with S5 and S12 plays an important role in translational accuracy. The chain is Small ribosomal subunit protein uS4c (rps4) from Brachypodium pinnatum (Tor grass).